A 123-amino-acid chain; its full sequence is Large ribosomal subunit protein bL12 (123 aa).

It belongs to the bacterial ribosomal protein bL12 family. As to quaternary structure, homodimer. Part of the ribosomal stalk of the 50S ribosomal subunit. Forms a multimeric L10(L12)X complex, where L10 forms an elongated spine to which 2 to 4 L12 dimers bind in a sequential fashion. Binds GTP-bound translation factors.

Its function is as follows. Forms part of the ribosomal stalk which helps the ribosome interact with GTP-bound translation factors. Is thus essential for accurate translation. The protein is Large ribosomal subunit protein bL12 of Clostridium acetobutylicum (strain ATCC 824 / DSM 792 / JCM 1419 / IAM 19013 / LMG 5710 / NBRC 13948 / NRRL B-527 / VKM B-1787 / 2291 / W).